A 194-amino-acid polypeptide reads, in one-letter code: Fe/S biogenesis protein NfuA (194 aa).

[4Fe-4S] cluster-binding residues include Cys152 and Cys155.

It belongs to the NfuA family. As to quaternary structure, homodimer. The cofactor is [4Fe-4S] cluster.

Its function is as follows. Involved in iron-sulfur cluster biogenesis. Binds a 4Fe-4S cluster, can transfer this cluster to apoproteins, and thereby intervenes in the maturation of Fe/S proteins. Could also act as a scaffold/chaperone for damaged Fe/S proteins. In Pseudomonas aeruginosa (strain LESB58), this protein is Fe/S biogenesis protein NfuA.